Consider the following 478-residue polypeptide: 3-isopropylmalate dehydratase large subunit (478 aa).

Cys359, Cys420, and Cys423 together coordinate [4Fe-4S] cluster.

The protein belongs to the aconitase/IPM isomerase family. LeuC type 1 subfamily. In terms of assembly, heterodimer of LeuC and LeuD. It depends on [4Fe-4S] cluster as a cofactor.

It carries out the reaction (2R,3S)-3-isopropylmalate = (2S)-2-isopropylmalate. It functions in the pathway amino-acid biosynthesis; L-leucine biosynthesis; L-leucine from 3-methyl-2-oxobutanoate: step 2/4. Its function is as follows. Catalyzes the isomerization between 2-isopropylmalate and 3-isopropylmalate, via the formation of 2-isopropylmaleate. The sequence is that of 3-isopropylmalate dehydratase large subunit from Psychrobacter sp. (strain PRwf-1).